Here is a 248-residue protein sequence, read N- to C-terminus: Aquaporin TIP2-3 (248 aa).

2 helical membrane passes run 20–40 and 54–74; these read AYVAEFIATLLFVFAGVGSAI and AGLVAIAIAHAFALFVGVSMA. An NPA 1 motif is present at residues 83–85; the sequence is NPA. Helical transmembrane passes span 97–119, 141–161, and 168–188; these read TILTGILYWVAQLLGASVACFLL, GVVMEIVITFALVYTVYATAA, and LGTIAPMAIGFIVGANILAAG. Positions 196-198 match the NPA 2 motif; the sequence is NPA. The helical transmembrane segment at 217–237 threads the bilayer; the sequence is WVGPLVGGGLAGLVYGDVFIA.

This sequence belongs to the MIP/aquaporin (TC 1.A.8) family. TIP (TC 1.A.8.10) subfamily. In terms of tissue distribution, specifically expressed in roots.

It localises to the cell membrane. Its function is as follows. Water channel required to facilitate the transport of water across cell membrane. This chain is Aquaporin TIP2-3 (TIP2-3), found in Zea mays (Maize).